The primary structure comprises 873 residues: Leucine--tRNA ligase (873 aa).

Positions Pro47–His57 match the 'HIGH' region motif. Positions Lys636 to Ser640 match the 'KMSKS' region motif. Lys639 provides a ligand contact to ATP.

Belongs to the class-I aminoacyl-tRNA synthetase family.

Its subcellular location is the cytoplasm. The catalysed reaction is tRNA(Leu) + L-leucine + ATP = L-leucyl-tRNA(Leu) + AMP + diphosphate. In Acinetobacter baylyi (strain ATCC 33305 / BD413 / ADP1), this protein is Leucine--tRNA ligase.